Here is a 241-residue protein sequence, read N- to C-terminus: 1-(5-phosphoribosyl)-5-[(5-phosphoribosylamino)methylideneamino] imidazole-4-carboxamide isomerase (241 aa).

Catalysis depends on aspartate 10, which acts as the Proton acceptor. Aspartate 131 functions as the Proton donor in the catalytic mechanism.

This sequence belongs to the HisA/HisF family.

The protein resides in the cytoplasm. The enzyme catalyses 1-(5-phospho-beta-D-ribosyl)-5-[(5-phospho-beta-D-ribosylamino)methylideneamino]imidazole-4-carboxamide = 5-[(5-phospho-1-deoxy-D-ribulos-1-ylimino)methylamino]-1-(5-phospho-beta-D-ribosyl)imidazole-4-carboxamide. Its pathway is amino-acid biosynthesis; L-histidine biosynthesis; L-histidine from 5-phospho-alpha-D-ribose 1-diphosphate: step 4/9. This chain is 1-(5-phosphoribosyl)-5-[(5-phosphoribosylamino)methylideneamino] imidazole-4-carboxamide isomerase, found in Bifidobacterium longum (strain NCC 2705).